A 302-amino-acid polypeptide reads, in one-letter code: MFFKNLQVYRFTRPLEQDIDTLERNLEEFKFKPCGSQDISKLGWVFPMGKSGSMYTHIAGKQILICLKKEEKMLPAGVIKDQLNERVEAIELEQGRALKKKEKDSLKEEIVMQLLPRAFSRTSQTFAWIDSESDMLYVDASSTRKAEELISLLRKTLGSLPIVPIQLKNQADVIMTDWLTEGNIPANFALEDEAELCSALEGGGIIRCKQQDLLSDEIKNHLSADKFVTKLALCWADSISFIIGEEFALKRIKFADVLQEQNEDIDKDDFAARFDADFALMTGEIKQLIPAVLAAFGGEQSL.

Belongs to the RdgC family.

It is found in the cytoplasm. It localises to the nucleoid. In terms of biological role, may be involved in recombination. The sequence is that of Recombination-associated protein RdgC from Psychromonas ingrahamii (strain DSM 17664 / CCUG 51855 / 37).